The primary structure comprises 1416 residues: DNA-directed RNA polymerase subunit beta (1416 aa).

Belongs to the RNA polymerase beta chain family. As to quaternary structure, in plastids the minimal PEP RNA polymerase catalytic core is composed of four subunits: alpha, beta, beta', and beta''. When a (nuclear-encoded) sigma factor is associated with the core the holoenzyme is formed, which can initiate transcription.

It localises to the plastid. It is found in the chloroplast. It carries out the reaction RNA(n) + a ribonucleoside 5'-triphosphate = RNA(n+1) + diphosphate. DNA-dependent RNA polymerase catalyzes the transcription of DNA into RNA using the four ribonucleoside triphosphates as substrates. The polypeptide is DNA-directed RNA polymerase subunit beta (Oltmannsiellopsis viridis (Marine flagellate)).